Here is a 248-residue protein sequence, read N- to C-terminus: AA9 family lytic polysaccharide monooxygenase G (248 aa).

Residues 1–21 (MLPNAAGLLVAGVVSLSGVAA) form the signal peptide. Histidine 22 is a binding site for Cu(2+). Asparagine 58 carries N-linked (GlcNAc...) asparagine glycosylation. A disulfide bond links cysteine 77 and cysteine 195. Cu(2+) is bound at residue histidine 107. Residue glutamine 190 coordinates O2. Residue tyrosine 192 participates in Cu(2+) binding. Asparagine 203 is a glycosylation site (N-linked (GlcNAc...) asparagine).

The protein belongs to the polysaccharide monooxygenase AA9 family. The cofactor is Cu(2+).

Its subcellular location is the secreted. The catalysed reaction is [(1-&gt;4)-beta-D-glucosyl]n+m + reduced acceptor + O2 = 4-dehydro-beta-D-glucosyl-[(1-&gt;4)-beta-D-glucosyl]n-1 + [(1-&gt;4)-beta-D-glucosyl]m + acceptor + H2O.. Functionally, lytic polysaccharide monooxygenase (LPMO) that depolymerizes crystalline and amorphous polysaccharides via the oxidation of scissile alpha- or beta-(1-4)-glycosidic bonds, yielding C1 or C4 oxidation products. Catalysis by LPMOs requires the reduction of the active-site copper from Cu(II) to Cu(I) by a reducing agent and H(2)O(2) or O(2) as a cosubstrate. The polypeptide is AA9 family lytic polysaccharide monooxygenase G (Malbranchea cinnamomea (Thermophilic fungus)).